Consider the following 152-residue polypeptide: Protein ripply3 (152 aa).

A compositionally biased stretch (basic and acidic residues) spans 1–24; it reads MRPEAAGVREARGRLCHCPGDDPG. Disordered stretches follow at residues 1-76 and 113-152; these read MRPE…GAFG and FYND…ERAE. The WRPW motif signature appears at 40–43; sequence WRPW. The tract at residues 79 to 114 is ripply homology domain; that stretch reads HPVRLYLPVSKRQEYLQSSGEKVLASFPVQATIHFY. Acidic residues predominate over residues 116–130; the sequence is DDSESGSEEEQEEEA. The segment covering 140-152 has biased composition (basic and acidic residues); that stretch reads AEVRDSAQEERAE.

This sequence belongs to the ripply family. In terms of assembly, interacts with TBX1.

Its subcellular location is the nucleus. Acts as a transcriptional corepressor. Negative regulator of the transcriptional activity of TBX1. Plays a role in the development of the pharyngeal apparatus and derivatives. This Mus musculus (Mouse) protein is Protein ripply3 (Ripply3).